The following is a 1382-amino-acid chain: Y' element ATP-dependent helicase protein 1 copy 4 (1382 aa).

In terms of domain architecture, Helicase ATP-binding spans Glu383–Ala560. Ala396–Thr403 is an ATP binding site. The region spanning Lys617 to Gly766 is the Helicase C-terminal domain. 2 disordered regions span residues Ala840–Thr864 and Thr880–Lys1007. Positions Thr880 to Ser983 are enriched in low complexity. A compositionally biased stretch (basic and acidic residues) spans Ala984–Lys1007.

Belongs to the helicase family. Yeast subtelomeric Y' repeat subfamily.

Functionally, catalyzes DNA unwinding and is involved in telomerase-independent telomere maintenance. The protein is Y' element ATP-dependent helicase protein 1 copy 4 (YRF1-4) of Saccharomyces cerevisiae (strain ATCC 204508 / S288c) (Baker's yeast).